Reading from the N-terminus, the 132-residue chain is MGKKDIRRKEQREKKRIARERVETLFTLAERVFPYSPELANRYVEIALSVQQKAKIRMPRKWKRRYCKKCHSFLVPGVNARVRLRDKPYPHVVITCLNCGNIMRYPYLREKKARRKYASKSTENGNGPDWTS.

4 residues coordinate Zn(2+): C67, C70, C96, and C99.

The protein belongs to the eukaryotic/archaeal RNase P protein component 4 family. In terms of assembly, consists of a catalytic RNA component and at least 4-5 protein subunits. It depends on Zn(2+) as a cofactor.

Its subcellular location is the cytoplasm. The catalysed reaction is Endonucleolytic cleavage of RNA, removing 5'-extranucleotides from tRNA precursor.. Functionally, part of ribonuclease P, a protein complex that generates mature tRNA molecules by cleaving their 5'-ends. The polypeptide is Ribonuclease P protein component 4 (Thermococcus kodakarensis (strain ATCC BAA-918 / JCM 12380 / KOD1) (Pyrococcus kodakaraensis (strain KOD1))).